Consider the following 671-residue polypeptide: Talaropentaene synthase (671 aa).

Asp92 contributes to the Mg(2+) binding site. The DDXXD 1 signature appears at 92–96 (DDMTD). Positions 223-231 (NDLYSYEKE) match the NSE/DTE motif. Residues Lys389, Arg392, and His421 each contribute to the isopentenyl diphosphate site. Residues Asp428 and Asp432 each coordinate Mg(2+). The DDXXD 2 motif lies at 428 to 432 (DDIED). Position 437 (Arg437) interacts with dimethylallyl diphosphate. Arg438 serves as a coordination point for isopentenyl diphosphate. Residues Lys515, Thr516, Gln551, Asn558, Lys568, and Lys578 each coordinate dimethylallyl diphosphate.

It in the N-terminal section; belongs to the terpene synthase family. In the C-terminal section; belongs to the FPP/GGPP synthase family. Mg(2+) serves as cofactor.

It catalyses the reaction 5 isopentenyl diphosphate + dimethylallyl diphosphate = all-trans-hexaprenyl diphosphate + 5 diphosphate. The catalysed reaction is all-trans-hexaprenyl diphosphate = talaropentaene + diphosphate. Functionally, bifunctional terpene synthase that converts dimethylallyl diphosphate (DMAPP) and isopentenyl diphosphate (IPP) into talaropentaene as a single product. The C-terminal prenyltransferase (PT) domain of MpMS catalyzes formation of hexaprenyl diphosphate (HexPP), whereas the N-terminal terpene cyclase (TC) domain catalyzes the cyclization of HexPP to talaropentaene. The sequence is that of Talaropentaene synthase from Talaromyces verruculosus (Penicillium verruculosum).